The chain runs to 275 residues: Tumor necrosis factor-inducible gene 6 protein (275 aa).

The first 17 residues, 1 to 17 (MVVLLCLCVLLWEEAHG), serve as a signal peptide directing secretion. The region spanning 36 to 129 (GVYHREARAG…SERWDAYCYN (94 aa)) is the Link domain. Disulfide bonds link cysteine 58-cysteine 127, cysteine 82-cysteine 103, and cysteine 135-cysteine 161. N-linked (GlcNAc...) asparagine glycosylation is present at asparagine 118. In terms of domain architecture, CUB spans 135 to 247 (CGGVFTDPKR…GGFQIKYVTV (113 aa)). The Ca(2+) site is built by glutamate 183, aspartate 191, aspartate 232, serine 234, and valine 235. A disulfide bridge links cysteine 188 with cysteine 210. Positions 253 to 264 (SSQAKNTSTTGN) are enriched in polar residues. The tract at residues 253–275 (SSQAKNTSTTGNKKFLPGRFSHL) is disordered. A glycan (N-linked (GlcNAc...) asparagine) is linked at asparagine 258.

As to quaternary structure, interacts (via Link domain) with inter-alpha-inhibitor (I-alpha-I) component bikunin. Interacts with ITIH2/HC2; this interaction is required for transesterification of the HC to hyaluronan. Interacts (via Link and CUB domains) with ITIH1. Chondroitin sulfate may be required for the stability of the complex. Interacts (via Link domain) with various C-X-C and C-C chemokines including PF4, CXCL8, CXCL11, CXCL12, CCL2, CCL7, CCL19, CCL21, and CCL27; this interaction interferes with chemokine binding to glycosaminoglycans. Interacts (primarily via Link domain) with BMP2; this interaction is inhibited by hyaluronan. Interacts (via both Link and CUB domains) with TNFSF11. Interacts (via CUB domain) with FN1 (via type III repeats 9-14); this interaction enhances fibronectin fibril assembly. TNFAIP6 may act as a bridging molecule between FN1 and THBS1. As to expression, expressed in epiphyseal and metaphyseal bone marrow of both the femur and tibia (at protein level).

The protein localises to the secreted. Major regulator of extracellular matrix organization during tissue remodeling. Catalyzes the transfer of a heavy chain (HC) from inter-alpha-inhibitor (I-alpha-I) complex to hyaluronan. Cleaves the ester bond between the C-terminus of the HC and GalNAc residue of the chondroitin sulfate chain in I-alpha-I complex followed by transesterification of the HC to hyaluronan. In the process, potentiates the antiprotease function of I-alpha-I complex through release of free bikunin. Acts as a catalyst in the formation of hyaluronan-HC oligomers and hyaluronan-rich matrix surrounding the cumulus cell-oocyte complex, a necessary step for oocyte fertilization. Assembles hyaluronan in pericellular matrices that serve as platforms for receptor clustering and signaling. Enables binding of hyaluronan deposited on the surface of macrophages to LYVE1 on lymphatic endothelium and facilitates macrophage extravasation. Alters hyaluronan binding to functionally latent CD44 on vascular endothelium, switching CD44 into an active state that supports leukocyte rolling. Modulates the interaction of chemokines with extracellular matrix components and proteoglycans on endothelial cell surface, likely preventing chemokine gradient formation. In a negative feedback mechanism, may limit excessive neutrophil recruitment at inflammatory sites by antagonizing the association of CXCL8 with glycosaminoglycans on vascular endothelium. Has a role in osteogenesis and bone remodeling. Inhibits BMP2-dependent differentiation of mesenchymal stem cell to osteoblasts. Protects against bone erosion during inflammation by inhibiting TNFSF11/RANKL-dependent osteoclast activation. This chain is Tumor necrosis factor-inducible gene 6 protein (Tnfaip6), found in Mus musculus (Mouse).